Here is a 445-residue protein sequence, read N- to C-terminus: Methionine aminopeptidase 2 (445 aa).

Positions 1–76 are disordered; that stretch reads MAAQVASGVG…KKKCTSKVQT (76 aa). Residues 57 to 71 show a composition bias toward basic residues; the sequence is AKKKKKKTKKKKKCT. H195 serves as a coordination point for substrate. A divalent metal cation-binding residues include D215, D226, and H295. Residue H303 coordinates substrate. Positions 331 and 426 each coordinate a divalent metal cation.

Belongs to the peptidase M24A family. Methionine aminopeptidase eukaryotic type 2 subfamily. The cofactor is Co(2+). Zn(2+) serves as cofactor. Mn(2+) is required as a cofactor. It depends on Fe(2+) as a cofactor.

It is found in the cytoplasm. The enzyme catalyses Release of N-terminal amino acids, preferentially methionine, from peptides and arylamides.. Its function is as follows. Cotranslationally removes the N-terminal methionine from nascent proteins. The N-terminal methionine is often cleaved when the second residue in the primary sequence is small and uncharged (Met-Ala-, Cys, Gly, Pro, Ser, Thr, or Val). The protein is Methionine aminopeptidase 2 of Paracoccidioides lutzii (strain ATCC MYA-826 / Pb01) (Paracoccidioides brasiliensis).